The following is a 311-amino-acid chain: Putative UPF0607 protein ENSP00000382826 (311 aa).

The span at A48–V61 shows a compositional bias: basic and acidic residues. Disordered regions lie at residues A48–P99, G186–L229, and R291–L311. Polar residues predominate over residues E78–Y97. Composition is skewed to basic residues over residues A213–L222 and R291–R305.

It belongs to the UPF0607 family.

In Homo sapiens (Human), this protein is Putative UPF0607 protein ENSP00000382826.